Consider the following 1586-residue polypeptide: COP1-interactive protein 1 (1586 aa).

Residues 10 to 84 (LKSFFEPHFD…RQYDDLTGEI (75 aa)) enclose the NAB domain. Positions 88-119 (VNGKGESSSSSSSDSDSDHSSKRKVKRNGNGK) are disordered. Coiled coils occupy residues 128–411 (TGAL…LKES), 437–1196 (ASEL…LKEE), 1225–1336 (LETL…TEAT), and 1372–1406 (MESLRNELEMKGDEIETLMEKISNIEVKLRLSNQK). LRR repeat units lie at residues 173-187 (SEEISSKLKLETEKL), 188-210 (EDEKSIALSDNRELHQKLEVAGK), 216-239 (NQKLEDIKKERDELQTERDNGIKR), 261-285 (TSNLKQQLEASEQRVSELTSGMNSA), and 287-309 (EENKSLSLKVSEISDVIQQGQTT). Positions 249-262 (DWKTTSDQLKDETS) are enriched in basic and acidic residues. The disordered stretch occupies residues 249-286 (DWKTTSDQLKDETSNLKQQLEASEQRVSELTSGMNSAE). The tract at residues 325–353 (KEKESEHSSLVELHKTHERESSSQVKELE) is disordered. LRR repeat units lie at residues 384–410 (IAELSNEIQEAQNTMQELMSESGQLKE), 437–461 (ASELEAQLESSKQQVSDLSASLKAA), 473–498 (VETMNKLEQTQNTIQELMAELGKLKD), 560–586 (IAELSNEIKEAQNTIQELVSESGQLKE), 613–637 (VSELEAQLESSEQRISDLTVDLKDA), 649–674 (LEIMDKLEQAQNTIKELMDELGELKD), 768–792 (LSELETQLKLLEQRVVDLSASLNAA), 824–850 (LAESKDTLTQKENELSSFVEVHEAHKR), 856–880 (VKELEARVESAEEQVKELNQNLNSS), 902–929 (ESTIQELSSESERLKGSHAEKDNELFSL), 944–968 (LRGLEAQLESSEHRVLELSESLKAA), 990–1014 (QIMVQELTADSSKLKEQLAEKESKL), 1077–1101 (ISELEKTMEERGTELSALTQKLEDN), 1120–1144 (RAELDSMSVQKEEVEKQMVCKSEEA), 1195–1220 (EEIINKVKVHESILEEINGLSEKIKG), 1247–1272 (VQMHDKINVASSEIMALTELINNLKN), 1372–1396 (MESLRNELEMKGDEIETLMEKISNI), 1398–1417 (VKLRLSNQKLRVTEQVLTEK), 1426–1448 (AKHLEEQALLEKNLTMTHETYRG), and 1450–1474 (IKEIADKVNITVDGFQSMSEKLTEK). Residues 430-456 (QRDSSTRASELEAQLESSKQQVSDLSA) form a disordered region. Over residues 444-455 (LESSKQQVSDLS) the composition is skewed to polar residues. The interval 965 to 985 (LKAAEEESRTMSTKISETSDE) is disordered. The stretch at 1496 to 1530 (VIERNHEKEKMNKEIEKKDEEIKKLGGKVREDEKE) forms a coiled coil.

In terms of assembly, interacts with COP1 coiled-coil region. In terms of tissue distribution, mainly expressed in photosynthetic and vascular tissues. Accumulates in both dark-grown and light-grown seedlings roots and shoots, leaves and flowers (at protein level).

The protein resides in the cell membrane. It localises to the cytoplasm. It is found in the cytoskeleton. Functionally, positive regulator of abscisic acid (ABA)-mediated signaling pathways involved in abiotic stress responses (e.g. osmotic stress) and leading to various plant adaptation (e.g. stomata closure). The sequence is that of COP1-interactive protein 1 from Arabidopsis thaliana (Mouse-ear cress).